We begin with the raw amino-acid sequence, 349 residues long: Twinfilin-2 (349 aa).

Alanine 2 is subject to N-acetylalanine. ADF-H domains follow at residues 4 to 139 and 177 to 313; these read QTGI…KHLS and GLAF…DEVH. An N6-acetyllysine modification is found at lysine 14. Tyrosine 309 bears the Phosphotyrosine mark. The segment at 322–349 is disordered; sequence AFAKPKGPGGKRGHKRLIRGPGENGEDS. Basic residues predominate over residues 330 to 339; that stretch reads GGKRGHKRLI. Serine 349 bears the Phosphoserine mark.

This sequence belongs to the actin-binding proteins ADF family. Twinfilin subfamily. As to quaternary structure, interacts with G-actin; ADP-actin form and capping protein (CP). Isoform 2 interacts (via its N-terminal ADF-H domain) with G-actin (ADP-bound form) with significantly higher affinity than isoform 1. May also be able to interact with TWF1 and phosphoinositides, PI(4,5)P2. When bound to PI(4,5)P2, it is down-regulated. Interacts with MYO7A. Post-translationally, phosphorylated on both serine/threonine and tyrosine. In terms of tissue distribution, isoform 1 is ubiquitously expressed (at protein level). Isoform 2 expression is restricted to heart and skeletal muscle where it is the predominant form.

Its subcellular location is the cytoplasm. The protein resides in the cytoskeleton. It localises to the perinuclear region. The protein localises to the cell projection. It is found in the stereocilium. In terms of biological role, actin-binding protein involved in motile and morphological processes. Inhibits actin polymerization, likely by sequestering G-actin. By capping the barbed ends of filaments, it also regulates motility. Seems to play an important role in clathrin-mediated endocytosis and distribution of endocytic organelles. May play a role in regulating the mature length of the middle and short rows of stereocilia. This is Twinfilin-2 (Twf2) from Mus musculus (Mouse).